The following is a 469-amino-acid chain: Crinkler effector protein 1 (469 aa).

The first 17 residues, 1–17 (MSITLLCLIKGNTLANA), serve as a signal peptide directing secretion. The tract at residues 18 to 57 (FPVDIDKDQLVGHLKKVIKAEQPQTFANVDAKDLKLWRVP) is LQLFLAK-like domain. The DWL domain stretch occupies residues 58-96 (ISDDHDDQLRNLSLEDSDELLAIRKISKYFPDSPPEECI). Asparagine 68 carries N-linked (GlcNAc...) asparagine glycosylation. The HVLVXXP motif signature appears at 97–103 (HVLVEPP). 3 N-linked (GlcNAc...) asparagine glycosylation sites follow: asparagine 126, asparagine 181, and asparagine 248.

It belongs to the Crinkler effector family. As to quaternary structure, homodimer.

The protein resides in the secreted. It localises to the host nucleus. In terms of biological role, effector that participates in the arbuscule development step of the symbiosis. Arbuscular mycorrhizal (AM) symbiosis is one of the most prominent and beneficial plant-microbe interactions that facilitates mineral nutrition and confers tolerance to biotic and abiotic stresses. Is not involved in cell death processes. In Rhizophagus irregularis (strain DAOM 181602 / DAOM 197198 / MUCL 43194) (Arbuscular mycorrhizal fungus), this protein is Crinkler effector protein 1.